A 1588-amino-acid chain; its full sequence is Autotransporter adhesin EhaG (1588 aa).

The first 53 residues, 1 to 53 (MNKIFKVIWNPATGNYTVTSETAKSRGKKSGRSKLLISALVAGGMLSSFGALA), serve as a signal peptide directing secretion. The tract at residues 54–1499 (NAGNDNGQGV…QETKQYTDQR (1446 aa)) is surface exposed passenger domain. The tract at residues 1500–1588 (MVEMDNKLSK…SAALGAGIQW (89 aa)) is translocator domain. A run of 4 beta stranded transmembrane segments spans residues 1534-1544 (GASMASIGGGT), 1548-1558 (ESAVALGVSMV), 1567-1573 (KLQGSTN), and 1577-1588 (EYSAALGAGIQW).

It belongs to the autotransporter-2 (AT-2) (TC 1.B.40) family. Homotrimer.

Its subcellular location is the cell surface. The protein resides in the cell outer membrane. Its function is as follows. Mediates aggregation, biofilm formation and adhesion to a range of extracellular matrix (ECM) proteins, such as fibronectin, fibrinogen, laminin and collagen types I, II, III, and V. Mediates adhesion to intestinal epithelial cells. The polypeptide is Autotransporter adhesin EhaG (Escherichia coli O157:H7).